The following is a 259-amino-acid chain: Gene 2 protein (259 aa).

2 stretches are compositionally biased toward basic and acidic residues: residues 1–12 (MPPTELEKKRGE) and 21–36 (QKQHAPTDEKREAKRK). The segment at 1–36 (MPPTELEKKRGEYNQIAIDAQKQHAPTDEKREAKRK) is disordered.

The protein is Gene 2 protein (2) of Mycobacterium (Mycobacteriophage L5).